A 185-amino-acid polypeptide reads, in one-letter code: UPF0301 protein HCH_00550 (185 aa).

The protein belongs to the UPF0301 (AlgH) family.

This Hahella chejuensis (strain KCTC 2396) protein is UPF0301 protein HCH_00550.